The sequence spans 307 residues: O-acetylserine dependent cystathionine beta-synthase (307 aa).

At lysine 44 the chain carries N6-(pyridoxal phosphate)lysine. Residues asparagine 74, 178 to 182 (GSGGT), and serine 265 each bind pyridoxal 5'-phosphate.

It belongs to the cysteine synthase/cystathionine beta-synthase family. Pyridoxal 5'-phosphate serves as cofactor.

The catalysed reaction is O-acetyl-L-serine + L-homocysteine = L,L-cystathionine + acetate + H(+). In terms of biological role, catalyzes the conversion of O-acetylserine and homocysteine to cystathionine. The chain is O-acetylserine dependent cystathionine beta-synthase (mccA) from Bacillus subtilis (strain 168).